The following is a 439-amino-acid chain: C4-dicarboxylate transport protein (439 aa).

The next 9 membrane-spanning stretches (helical) occupy residues 9–29, 45–65, 80–100, 150–170, 186–206, 221–241, 291–311, 334–354, and 357–377; these read HLYF…YYMP, MIKM…IAGM, LYFE…INVI, GEIL…SAMG, AFFG…FGAM, LGML…VVLG, VVGL…SIYL, ILGV…SGFV, and AATF…ILGI.

It belongs to the dicarboxylate/amino acid:cation symporter (DAACS) (TC 2.A.23) family.

The protein resides in the cell inner membrane. Responsible for the transport of dicarboxylates such as succinate, fumarate, and malate from the periplasm across the membrane. This is C4-dicarboxylate transport protein from Citrifermentans bemidjiense (strain ATCC BAA-1014 / DSM 16622 / JCM 12645 / Bem) (Geobacter bemidjiensis).